A 277-amino-acid polypeptide reads, in one-letter code: Large ribosomal subunit protein uL2 (277 aa).

Positions 222-277 (GVAMNPIDHPHGGGEGRTSGGRHPVTPWGKPTKGKKTRTNKSTDKFILLSRHKRKK) are disordered.

Belongs to the universal ribosomal protein uL2 family. Part of the 50S ribosomal subunit. Forms a bridge to the 30S subunit in the 70S ribosome.

One of the primary rRNA binding proteins. Required for association of the 30S and 50S subunits to form the 70S ribosome, for tRNA binding and peptide bond formation. It has been suggested to have peptidyltransferase activity; this is somewhat controversial. Makes several contacts with the 16S rRNA in the 70S ribosome. This is Large ribosomal subunit protein uL2 from Bradyrhizobium sp. (strain ORS 278).